The following is a 100-amino-acid chain: Urease subunit gamma (100 aa).

It belongs to the urease gamma subunit family. As to quaternary structure, heterotrimer of UreA (gamma), UreB (beta) and UreC (alpha) subunits. Three heterotrimers associate to form the active enzyme.

The protein resides in the cytoplasm. It carries out the reaction urea + 2 H2O + H(+) = hydrogencarbonate + 2 NH4(+). It participates in nitrogen metabolism; urea degradation; CO(2) and NH(3) from urea (urease route): step 1/1. The chain is Urease subunit gamma from Synechococcus sp. (strain CC9902).